A 451-amino-acid polypeptide reads, in one-letter code: UDP-N-acetylmuramoylalanine--D-glutamate ligase (451 aa).

119–125 (GSNGKTT) lines the ATP pocket.

The protein belongs to the MurCDEF family.

Its subcellular location is the cytoplasm. It carries out the reaction UDP-N-acetyl-alpha-D-muramoyl-L-alanine + D-glutamate + ATP = UDP-N-acetyl-alpha-D-muramoyl-L-alanyl-D-glutamate + ADP + phosphate + H(+). Its pathway is cell wall biogenesis; peptidoglycan biosynthesis. Its function is as follows. Cell wall formation. Catalyzes the addition of glutamate to the nucleotide precursor UDP-N-acetylmuramoyl-L-alanine (UMA). This Streptococcus mutans serotype c (strain ATCC 700610 / UA159) protein is UDP-N-acetylmuramoylalanine--D-glutamate ligase.